The chain runs to 264 residues: Putative HTH-type transcriptional regulator TrmBL2 (264 aa).

The H-T-H motif DNA-binding region spans 33–54; that stretch reads LTPAELASVSEVPAPRTYDVLR.

It belongs to the transcriptional regulator TrmB family.

Functionally, binds to the maltodextrin transport gene cluster (mdxE operon) promoter and to some other TGM (Thermococcales-Glycolytic-Motif) sequences, but not exclusively. The polypeptide is Putative HTH-type transcriptional regulator TrmBL2 (trmBL2) (Pyrococcus furiosus (strain ATCC 43587 / DSM 3638 / JCM 8422 / Vc1)).